The sequence spans 153 residues: Calmodulin-like protein 4 (153 aa).

4 consecutive EF-hand domains span residues 8–43 (DQIN…LGAS), 44–79 (PTPG…QIKQ), 81–116 (DPKK…LGEK), and 117–152 (LTHK…PVRD).

The protein belongs to the calmodulin family. As to quaternary structure, interacts with MYO7B; the interaction mediates the association of CALML4 with the IMAC/intermicrovillar adhesion complex. Interacts with MYO7A.

Its subcellular location is the cell projection. It localises to the microvillus. In terms of biological role, as part of the intermicrovillar adhesion complex/IMAC plays a role in epithelial brush border differentiation, controlling microvilli organization and length. Acts as a light chain for MYO7B and is required for efficient targeting of the IMAC to the tips of border brush microvilli. This chain is Calmodulin-like protein 4 (CALML4), found in Bos taurus (Bovine).